Reading from the N-terminus, the 368-residue chain is Serine/threonine-protein phosphatase PP2A-like PPG1 (368 aa).

Mn(2+)-binding residues include Asp50, His52, Asp78, and Asn110. The Proton donor role is filled by His111. 2 residues coordinate Mn(2+): His161 and His247.

It belongs to the PPP phosphatase family. PP-2A subfamily. In terms of assembly, inactivated in a complex with phosphatase methylesterase PPE1 (PP2Ai). Interacts with phosphatase 2A activator RRD1, which can reactivate PP2Ai by dissociating the catalytic subunit from the complex. Interacts with TAP42. Requires Mn(2+) as cofactor. In terms of processing, reversibly methyl esterified on Leu-368 by leucine carboxyl methyltransferase 1 (PPM1) and protein phosphatase methylesterase 1 (PPE1). Carboxyl methylation influences the affinity of the catalytic subunit for the different regulatory subunits, thereby modulating the PP2A holoenzyme's substrate specificity, enzyme activity and cellular localization.

The enzyme catalyses O-phospho-L-seryl-[protein] + H2O = L-seryl-[protein] + phosphate. The catalysed reaction is O-phospho-L-threonyl-[protein] + H2O = L-threonyl-[protein] + phosphate. In terms of biological role, involved in glycogen accumulation. In Saccharomyces cerevisiae (strain ATCC 204508 / S288c) (Baker's yeast), this protein is Serine/threonine-protein phosphatase PP2A-like PPG1 (PPG1).